We begin with the raw amino-acid sequence, 1571 residues long: Disco-interacting protein 2 homolog A (1571 aa).

Residues 9–127 (EAAPLPAEVR…KRRSVLVHSS (119 aa)) enclose the DMAP1-binding domain. The interval 60–203 (LQAENRIPGP…APSAAATPGA (144 aa)) is disordered. A compositionally biased stretch (basic and acidic residues) spans 86–98 (ASRDERFRSDVHT). Serine 94 is subject to Phosphoserine. 2 stretches are compositionally biased toward polar residues: residues 127–139 (SVET…TSSA) and 152–162 (LTSTPLQSHSS). Residues threonine 132 and threonine 155 each carry the phosphothreonine modification. Residues 174–203 (SSTSSSASSTSSHPGGRPTTAPSAAATPGA) are compositionally biased toward low complexity. 2 short sequence motifs (PXXP motif; required for interaction with CTTN) span residues 283-286 (PKRP) and 307-310 (PNQP). The tract at residues 302-327 (VQQPDPNQPKPEGSETSVLRGEPLTA) is disordered.

Belongs to the DIP2 family. As to quaternary structure, interacts with FSTL1; DIP2A may act as a cell surface receptor for FSTL1. Interacts (via N-terminus) with CTTN (via SH3 domain); the interaction promotes acetylation of CTTN and is required for proper synaptic transmission. Interacts with SHANK3. As to expression, low expression in all tissues tested.

It is found in the cell membrane. The protein localises to the mitochondrion. The protein resides in the cell projection. It localises to the dendritic spine. The catalysed reaction is acetate + ATP + CoA = acetyl-CoA + AMP + diphosphate. Functionally, catalyzes the de novo synthesis of acetyl-CoA in vitro. Promotes acetylation of CTTN, possibly by providing the acetyl donor, ensuring correct dendritic spine morphology and synaptic transmission. Binds to follistatin-related protein FSTL1 and may act as a cell surface receptor for FSTL1, contributing to AKT activation and subsequent FSTL1-induced survival and function of endothelial cells and cardiac myocytes. This chain is Disco-interacting protein 2 homolog A (DIP2A), found in Homo sapiens (Human).